We begin with the raw amino-acid sequence, 31 residues long: Cytochrome b6-f complex subunit 6 (31 aa).

Residues 4 to 24 (ITSYFGFLLAALTITSALFIG) traverse the membrane as a helical segment.

The protein belongs to the PetL family. In terms of assembly, the 4 large subunits of the cytochrome b6-f complex are cytochrome b6, subunit IV (17 kDa polypeptide, PetD), cytochrome f and the Rieske protein, while the 4 small subunits are PetG, PetL, PetM and PetN. The complex functions as a dimer.

It localises to the plastid. It is found in the chloroplast thylakoid membrane. In terms of biological role, component of the cytochrome b6-f complex, which mediates electron transfer between photosystem II (PSII) and photosystem I (PSI), cyclic electron flow around PSI, and state transitions. PetL is important for photoautotrophic growth as well as for electron transfer efficiency and stability of the cytochrome b6-f complex. In Humulus lupulus (European hop), this protein is Cytochrome b6-f complex subunit 6.